Consider the following 1178-residue polypeptide: Niemann-Pick type C1-related protein (1178 aa).

Asn-41 is a glycosylation site (N-linked (GlcNAc...) asparagine). The next 2 membrane-spanning stretches (helical) occupy residues 157-177 (PWLF…GIFL) and 412-432 (VVEW…TSVV). One can recognise an SSD domain in the interval 414–570 (EWLRLCAAVL…LTFFLAGLSL (157 aa)). The N-linked (GlcNAc...) asparagine glycan is linked to Asn-433. 4 consecutive transmembrane segments (helical) span residues 448 to 468 (GALA…LCGV), 478 to 498 (PFLA…AYSL), 516 to 536 (AGLS…IGAL), and 545 to 565 (FCII…TFFL). N-linked (GlcNAc...) asparagine glycosylation occurs at Asn-621. A helical membrane pass occupies residues 789-809 (ATVLVIFAAVTALAIYGATTL). 2 N-linked (GlcNAc...) asparagine glycosylation sites follow: Asn-917 and Asn-943. Helical transmembrane passes span 986–1006 (FTLT…LLLI), 1013–1033 (IIVV…MALI), 1037–1057 (LSMI…DFTI), 1080–1100 (IVMG…ILAL), and 1114–1134 (MMFM…PVVL).

Belongs to the patched family.

The protein localises to the inner membrane complex. It carries out the reaction cholesterol(in) = cholesterol(out). Likely facilitates the efflux of cholesterol and gangliosides from membranes. Plays a role in the regulation of lipid homeostasis. The polypeptide is Niemann-Pick type C1-related protein (Toxoplasma gondii (strain ATCC 50611 / Me49)).